The following is a 210-amino-acid chain: Putative transmembrane protein DDB_G0267530 (210 aa).

A disordered region spans residues 1 to 40; that stretch reads MGVEDQPQTQPQTQPQQQPQMGYQPQMGYQPQAQMGYQPQ. 2 helical membrane passes run 119–139 and 148–168; these read VIVFIIGFFFSIVWLGGFFFI and TFGILSVVFFFLVLVIVVIVV.

It is found in the membrane. This chain is Putative transmembrane protein DDB_G0267530, found in Dictyostelium discoideum (Social amoeba).